The chain runs to 145 residues: Aklanonic acid methyl ester cyclase DnrD (145 aa).

Q106 provides a ligand contact to substrate.

It belongs to the polyketide cyclase DnrD family. In terms of assembly, homotetramer.

The catalysed reaction is methyl aklanonate = aklaviketone. It participates in antibiotic biosynthesis; daunorubicin biosynthesis. Its pathway is antibiotic biosynthesis; carminomycin biosynthesis. It functions in the pathway antibiotic biosynthesis; rhodomycin biosynthesis. The protein operates within antibiotic biosynthesis; aclacinomycin biosynthesis. Involved in the biosynthesis of aklavinone which is an important precursor common to the formation of the clinically significant anthracyclines such as carminomycin, daunorubicin (daunomycin), rhodomycin, aclacinomycin T (aklavin) and aclacinomycin A (aclarubicin). These compounds are aromatic polyketide antibiotics that exhibit high cytotoxicity and are widely applied in the chemotherapy of a variety of cancers. Catalyzes the cyclization of aklanonic acid methyl ester to yield aklaviketone presumably via an intramolecular aldol condensation mechanism, although water is not eliminated. In Streptomyces peucetius, this protein is Aklanonic acid methyl ester cyclase DnrD (dnrD).